A 390-amino-acid polypeptide reads, in one-letter code: Neuromedin-B receptor (390 aa).

Residues Met-1–Gly-19 show a composition bias toward polar residues. Positions Met-1–Pro-22 are disordered. Residues Met-1–Val-41 lie on the Extracellular side of the membrane. Asn-8 and Asn-16 each carry an N-linked (GlcNAc...) asparagine glycan. A helical transmembrane segment spans residues Ile-42–Val-65. Topologically, residues Lys-66–Asn-79 are cytoplasmic. The helical transmembrane segment at Ile-80–Val-99 threads the bilayer. Over Asp-100–Lys-117 the chain is Extracellular. Cys-116 and Cys-198 form a disulfide bridge. Residues Leu-118 to Ala-139 form a helical membrane-spanning segment. At Asp-140–Ala-156 the chain is on the cytoplasmic side. Residues Leu-157–Pro-177 traverse the membrane as a helical segment. At Glu-178–Ile-211 the chain is on the extracellular side. Residue Asn-192 is glycosylated (N-linked (GlcNAc...) asparagine). A helical membrane pass occupies residues His-212–Ile-235. Topologically, residues Ala-236–Lys-266 are cytoplasmic. The helical transmembrane segment at Ile-267–Met-287 threads the bilayer. The Extracellular portion of the chain corresponds to Tyr-288–Ser-299. The helical transmembrane segment at Leu-300 to Leu-327 threads the bilayer. Over Ser-328 to Leu-390 the chain is Cytoplasmic. The S-palmitoyl cysteine moiety is linked to residue Cys-341. Ser-352 carries the phosphoserine modification.

It belongs to the G-protein coupled receptor 1 family. As to expression, expressed in epididymis (at protein level).

The protein resides in the cell membrane. Receptor for neuromedin-B. Contributes to the maintenance of basal sigh rate through signaling in the pre-Botzinger complex, a cluster of several thousand neurons in the ventrolateral medulla responsible for inspiration during respiratory activity. Contributes to the induction of sneezing following exposure to chemical irritants or allergens which causes release of NMB by nasal sensory neurons and activation of NMBR-expressing neurons in the sneeze-evoking region of the brainstem. These in turn activate neurons of the caudal ventral respiratory group, giving rise to the sneezing response. Contributes to induction of acute itch, possibly through its activation on dorsal root ganglion neurons by the NMB peptide. Plays a role in the innate immune response to influenza A virus infection by enhancing interferon alpha expression and reducing expression of IL6. Plays a role in CSF1-induced proliferation of osteoclast precursors by contributing to the positive regulation of the expression of the CSF1 receptor CSF1R. The polypeptide is Neuromedin-B receptor (NMBR) (Homo sapiens (Human)).